The following is a 359-amino-acid chain: DNA integrity scanning protein DisA (359 aa).

Residues 7-146 form the DAC domain; sequence DEVLRQTLAI…NRRYVLEGSD (140 aa). ATP contacts are provided by residues glycine 74, leucine 92, and 105–109; that span reads TRHRT.

It belongs to the DisA family. As to quaternary structure, homooctamer. Requires Mg(2+) as cofactor.

It catalyses the reaction 2 ATP = 3',3'-c-di-AMP + 2 diphosphate. Its function is as follows. Participates in a DNA-damage check-point. DisA forms globular foci that rapidly scan along the chromosomes searching for lesions. In terms of biological role, also has diadenylate cyclase activity, catalyzing the condensation of 2 ATP molecules into cyclic di-AMP (c-di-AMP). c-di-AMP likely acts as a signaling molecule that may couple DNA integrity with a cellular process. The chain is DNA integrity scanning protein DisA from Kineococcus radiotolerans (strain ATCC BAA-149 / DSM 14245 / SRS30216).